A 182-amino-acid polypeptide reads, in one-letter code: Probable pyruvoyl-dependent arginine decarboxylase (182 aa).

Ser-43 is modified (pyruvic acid (Ser)).

Belongs to the PdaD family. The cofactor is pyruvate.

It catalyses the reaction L-arginine + H(+) = agmatine + CO2. The chain is Probable pyruvoyl-dependent arginine decarboxylase from Chloroherpeton thalassium (strain ATCC 35110 / GB-78).